The sequence spans 73 residues: uncharacterized protein (73 aa).

Positions 1 to 22 are cleaved as a signal peptide; that stretch reads MKILGVTGFILICLLAISVLMD. The chain crosses the membrane as a helical span at residues 44-66; the sequence is TFAEWVVLLFFVLVLVREMYVIY.

Its subcellular location is the membrane. This is an uncharacterized protein from Bacillus subtilis (strain 168).